Reading from the N-terminus, the 237-residue chain is Sugar fermentation stimulation protein homolog (237 aa).

The protein belongs to the SfsA family.

In Pseudomonas fluorescens (strain ATCC BAA-477 / NRRL B-23932 / Pf-5), this protein is Sugar fermentation stimulation protein homolog.